A 216-amino-acid chain; its full sequence is ATP-dependent Clp protease proteolytic subunit (216 aa).

The Nucleophile role is filled by serine 101. Histidine 126 is a catalytic residue.

It belongs to the peptidase S14 family. Component of the chloroplastic Clp protease core complex.

It is found in the plastid. It localises to the chloroplast stroma. It carries out the reaction Hydrolysis of proteins to small peptides in the presence of ATP and magnesium. alpha-casein is the usual test substrate. In the absence of ATP, only oligopeptides shorter than five residues are hydrolyzed (such as succinyl-Leu-Tyr-|-NHMec, and Leu-Tyr-Leu-|-Tyr-Trp, in which cleavage of the -Tyr-|-Leu- and -Tyr-|-Trp bonds also occurs).. Its function is as follows. Cleaves peptides in various proteins in a process that requires ATP hydrolysis. Has a chymotrypsin-like activity. Plays a major role in the degradation of misfolded proteins. This is ATP-dependent Clp protease proteolytic subunit from Triticum aestivum (Wheat).